The following is a 37-amino-acid chain: MKVKPSVKRICAKCRVIRRHGKIRVICEDPRHKQRQG.

Belongs to the bacterial ribosomal protein bL36 family.

This Thermobifida fusca (strain YX) protein is Large ribosomal subunit protein bL36.